A 368-amino-acid polypeptide reads, in one-letter code: Tubby-like F-box protein 2 (368 aa).

Over residues 1–17 (MVPWRRSSSSSSAPSSR) the composition is skewed to low complexity. Residues 1 to 44 (MVPWRRSSSSSSAPSSRPARRPARTNARVSPDVSSELSPLAGEE) form a disordered region. The F-box domain maps to 49-104 (ERWSALVPDLLADILRCVEAGSERWPPRRDVVACASVCRRWRDVAVAVVQPPLESG).

It belongs to the TUB family. In terms of tissue distribution, expressed in stems, leaves, flowers and seeds.

The chain is Tubby-like F-box protein 2 (TULP2) from Oryza sativa subsp. japonica (Rice).